The following is a 135-amino-acid chain: HTH-type transcriptional activator AarP (135 aa).

Residues 22–120 (SEILVWIEGN…GISPSLYRLS (99 aa)) enclose the HTH araC/xylS-type domain. 2 consecutive DNA-binding regions (H-T-H motif) follow at residues 39-60 (DDIA…RKIV) and 87-110 (VIDI…KAYL).

Transcriptional activator of 2'-N-acetyltransferase. This is HTH-type transcriptional activator AarP (aarP) from Providencia stuartii.